The following is an 882-amino-acid chain: DNA mismatch repair protein MutS (882 aa).

The interval 1-22 (MTLPSDFPLEPPATNKDPHRDY) is disordered. An ATP-binding site is contributed by 662–669 (GPNASGKS).

This sequence belongs to the DNA mismatch repair MutS family.

Functionally, this protein is involved in the repair of mismatches in DNA. It is possible that it carries out the mismatch recognition step. This protein has a weak ATPase activity. This is DNA mismatch repair protein MutS from Microcystis aeruginosa (strain NIES-843 / IAM M-2473).